Consider the following 450-residue polypeptide: Beclin-1 (450 aa).

An N-acetylmethionine modification is found at M1. Residues S15 and S30 each carry the phosphoserine modification. A disordered region spans residues 48-72 (TTAQAKPGETQEEETNSGEEPFIET). A phosphoserine; by AMPK mark is found at S90, S93, and S96. A BH3 motif is present at residues 108–127 (TMENLSRRLKVTGDLFDIMS). The interval 112 to 159 (LSRRLKVTGDLFDIMSGQTDVDHPLCEECTDTLLDQLDTQLNVTENEC) is interaction with BCL2 and BCL2L1 isoform Bcl-X(L). T119 carries the phosphothreonine; by DAPK1 modification. Residues 142–270 (DTLLDQLDTQ…LDKLKKTNVF (129 aa)) adopt a coiled-coil conformation. Residues 245–450 (DELKSVENQM…AWVSSQFYNK (206 aa)) form an evolutionary conserved domain (ECD) region. Residues K402 and K437 each participate in a glycyl lysine isopeptide (Lys-Gly) (interchain with G-Cter in ubiquitin) cross-link. A required for membrane-association region spans residues 425-450 (WTKALKFMLTNLKWGLAWVSSQFYNK).

This sequence belongs to the beclin family. In terms of assembly, a homodimeric form is proposed to exist; this metastable form readily transits to ATG14- or UVRAG-containing complexes with BECN1:UVRAG being more stable than BECN1:ATG14. Component of the PI3K (PI3KC3/PI3K-III/class III phosphatidylinositol 3-kinase) complex the core of which is composed of the catalytic subunit PIK3C3, the regulatory subunit PIK3R4 and BECN1 associating with additional regulatory/auxiliary subunits to form alternative complex forms. Alternative complex forms containing a fourth regulatory subunit in a mutually exclusive manner are PI3K complex I (PI3KC3-C1) containing ATG14, and PI3K complex II (PI3KC3-C2) containing UVRAG. PI3KC3-C1 displays a V-shaped architecture with PIK3R4 serving as a bridge between PIK3C3 and the ATG14:BECN1 subcomplex. Both, PI3KC3-C1 and PI3KC3-C2, can associate with further regulatory subunits, such as RUBCN, SH3GLB1/Bif-1 and AMBRA1. PI3KC3-C1 probably associates with PIK3CB. Forms a complex with PPP2CA and AMBRA1; AMBRA1 and BECN1 components of the complex regulate MYC stability via different pathways. Component of the complex, at least composed of LRPPRC, BECN1 and BCL2; the interactions prevent BECN1 from forming an autophagy-inducing complex with PIK3C3. Interacts with AMBRA1, GOPC, GRID2. Interacts with BCL2 and BCL2L1 isoform Bcl-X(L); the interaction inhibits BECN1 function in promoting autophagy by interfering with the formation of the PI3K complex. Interacts with cytosolic HMGB1; inhibits the interaction of BECN1 and BCL2 leading to promotion of autophagy. Interacts with USP10, USP13, VMP1, DAPK1, RAB39A. Interacts with the poly-Gln domain of ATXN3; the interaction causes deubiquitination at Lys-402 and stabilizes BECN1. Interacts with SLAMF1. Interacts with TRIM5; the interaction causes activation of BECN1 by causing its dissociation from its inhibitors BCL2 and TAB2. Interacts with active ULK1 (phosphorylated on 'Ser-317') and MEFV simultaneously. Interacts with WDR81 and WDR91; negatively regulates the PI3 kinase/PI3K activity associated with endosomal membranes. Interacts with LAPTM4B; competes with EGFR for LAPTM4B binding; regulates EGFR activity. Interacts with TRIM50. Interacts with TRIM16. Interacts with ATG14; this interaction is increased in the absence of TMEM39A. Interacts with WASHC1; preventing interaction with AMBRA1 and the DCX(AMBRA1) complex and subsequent ubiquitination. Interacts with TRIM17. Interacts with BCL2L10/BCL-B (via BH1 domain). Interacts with SH3BGRL. Interacts with IRGM; enhancing BECN1-interacting partners and influencing the composition of the BECN1 complex. Interacts with ARMC3. Interacts with LRPPRC. (Microbial infection) Interacts with human cytomegalovirus/HHV-5 protein TRS1. As to quaternary structure, (Microbial infection) Interacts with murine gammaherpesvirus 68 M11. In terms of assembly, (Microbial infection) Interacts with herpes simplex virus 1 (HHV-1) protein ICP34.5; this interaction antagonizes the host autophagy response. (Microbial infection) Interacts with Epstein-Barr virus protein BHRF1; this interaction inhibits BECN1-mediated autophagy induction. In terms of processing, phosphorylation at Thr-119 by DAPK1 reduces its interaction with BCL2 and BCL2L1 and promotes induction of autophagy. In response to autophagic stimuli, phosphorylated at serine residues by AMPK in an ATG14-dependent manner, and this phosphorylation is critical for maximally efficient autophagy. Post-translationally, polyubiquitinated by NEDD4, both with 'Lys-11'- and 'Lys-63'-linkages. 'Lys-11'-linked polyubiquitination leads to degradation and is enhanced when the stabilizing interaction partner VPS34 is depleted. Deubiquitinated by USP10 and USP13, leading to stabilize the PIK3C3/VPS34-containing complexes. Polyubiquitinated at Lys-402 with 'Lys-48'-linkages. 'Lys-48'-linked polyubiquitination of Lys-402 leads to degradation. Deubiquitinated by ATXN3, leading to stabilization. Ubiquitinated at Lys-437 via 'Lys-63'-linkage by the DCX(AMBRA1) complex, thereby increasing the association between BECN1 and PIK3C3 to promote PIK3C3 activity. 'Lys-48'-linked ubiquitination by RNF216 leads to proteasomal degradation and autophagy inhibition. Proteolytically processed by caspases including CASP8 and CASP3; the C-terminal fragments lack autophagy-inducing capacity and are proposed to induce apoptosis. Thus the cleavage is proposed to be an determinant to switch from autophagy to apoptosis pathways affecting cellular homeostasis including viral infections and survival of tumor cells. As to expression, ubiquitous.

Its subcellular location is the cytoplasm. The protein localises to the golgi apparatus. It is found in the trans-Golgi network membrane. It localises to the endosome membrane. The protein resides in the endoplasmic reticulum membrane. Its subcellular location is the mitochondrion membrane. The protein localises to the endosome. It is found in the cytoplasmic vesicle. It localises to the autophagosome. The protein resides in the mitochondrion. Its subcellular location is the nucleus. In terms of biological role, plays a central role in autophagy. Acts as a core subunit of the PI3K complex that mediates formation of phosphatidylinositol 3-phosphate; different complex forms are believed to play a role in multiple membrane trafficking pathways: PI3KC3-C1 is involved in initiation of autophagosomes and PI3KC3-C2 in maturation of autophagosomes and endocytosis. Involved in regulation of degradative endocytic trafficking and required for the abscission step in cytokinesis, probably in the context of PI3KC3-C2. Essential for the formation of PI3KC3-C2 but not PI3KC3-C1 PI3K complex forms. Involved in endocytosis. May play a role in antiviral host defense. Beclin-1-C 35 kDa localized to mitochondria can promote apoptosis; it induces the mitochondrial translocation of BAX and the release of proapoptotic factors. Its function is as follows. (Microbial infection) Protects against infection by a neurovirulent strain of Sindbis virus. In Homo sapiens (Human), this protein is Beclin-1 (BECN1).